A 228-amino-acid polypeptide reads, in one-letter code: Dolichyl-phosphate hexose transferase HVO_1613 (228 aa).

This sequence belongs to the glycosyltransferase 2 family.

Glycosyltransferase that adds a monosaccharide to dolichol phosphate, thereby being responsible for generating one of the three monosaccharide-modified dolichol phosphates. The subunit onto which additional sugars are added is not known. The polypeptide is Dolichyl-phosphate hexose transferase HVO_1613 (Haloferax volcanii (strain ATCC 29605 / DSM 3757 / JCM 8879 / NBRC 14742 / NCIMB 2012 / VKM B-1768 / DS2) (Halobacterium volcanii)).